A 208-amino-acid chain; its full sequence is Intraflagellar transport protein 43 homolog (208 aa).

Met1 is modified (N-acetylmethionine). The interval 18–65 (SRAKMGRRAQQESAQAENHLNGKNSSLTLTGETSSAKLPRCRQGGWAG) is disordered. Residues 28-53 (QESAQAENHLNGKNSSLTLTGETSSA) are compositionally biased toward polar residues. Phosphoserine is present on Ser78.

Belongs to the IFT43 family. In terms of assembly, component of the IFT complex A (IFT-A) complex. IFT-A complex is divided into a core subcomplex composed of IFT122:IFT140:WDR19 which is associated with TULP3 and a peripheral subcomplex composed of IFT43:WDR35:TTC21B. Interacts directy with IFT122, WDR35 and TTC21B. In terms of tissue distribution, expressed in the retina, predominantly in the photoreceptor outer segment.

It localises to the cytoplasm. It is found in the cytoskeleton. The protein localises to the cell projection. Its subcellular location is the cilium. As a component of IFT complex A (IFT-A), a complex required for retrograde ciliary transport and entry into cilia of G protein-coupled receptors (GPCRs), it is involved in ciliogenesis. Involved in retrograde ciliary transport along microtubules from the ciliary tip to the base. The protein is Intraflagellar transport protein 43 homolog of Homo sapiens (Human).